A 153-amino-acid polypeptide reads, in one-letter code: Peptide methionine sulfoxide reductase B6 (153 aa).

The region spanning 28 to 149 (NEEWRTVLSP…NSVALKFSSA (122 aa)) is the MsrB domain. Zn(2+) is bound by residues Cys67, Cys70, Cys113, and Cys116. A disulfide bridge links Cys85 with Cys138. The active-site Nucleophile is Cys138.

Belongs to the MsrB Met sulfoxide reductase family. Requires Zn(2+) as cofactor.

It localises to the cytoplasm. The protein localises to the cytosol. It carries out the reaction L-methionyl-[protein] + [thioredoxin]-disulfide + H2O = L-methionyl-(R)-S-oxide-[protein] + [thioredoxin]-dithiol. Functionally, catalyzes the reduction of methionine sulfoxide (MetSO) to methionine in proteins. Plays a protective role against oxidative stress by restoring activity to proteins that have been inactivated by methionine oxidation. MSRB family specifically reduces the MetSO R-enantiomer. This Arabidopsis thaliana (Mouse-ear cress) protein is Peptide methionine sulfoxide reductase B6 (MSRB6).